The sequence spans 462 residues: GTPase Der (462 aa).

2 EngA-type G domains span residues 9 to 171 (KTIA…NLNQ) and 201 to 372 (IQVG…ECFS). Residues 15 to 22 (GQPNVGKS), 62 to 66 (DTGGM), 123 to 126 (NKID), 207 to 214 (GRVNVGKS), 254 to 258 (DTAGI), and 318 to 321 (NKWD) each bind GTP. In terms of domain architecture, KH-like spans 373-457 (KRIPTSLLNS…PLILNAKDKK (85 aa)).

This sequence belongs to the TRAFAC class TrmE-Era-EngA-EngB-Septin-like GTPase superfamily. EngA (Der) GTPase family. Associates with the 50S ribosomal subunit.

Its function is as follows. GTPase that plays an essential role in the late steps of ribosome biogenesis. The polypeptide is GTPase Der (Helicobacter pylori (strain P12)).